A 354-amino-acid polypeptide reads, in one-letter code: Protein-arginine kinase (354 aa).

Residues Ile24–Ala254 form the Phosphagen kinase C-terminal domain. ATP-binding positions include Ser27–Arg31, His92, Arg125, Arg176–Met180, and Arg207–Glu212. Residues Arg337–Ala342 carry the RDXXRA motif of the pArg binding pocket involved in allosteric regulation motif.

The protein belongs to the ATP:guanido phosphotransferase family.

The enzyme catalyses L-arginyl-[protein] + ATP = N(omega)-phospho-L-arginyl-[protein] + ADP + H(+). With respect to regulation, appears to be allosterically activated by the binding of pArg-containing polypeptides to the pArg-binding pocket localized in the C-terminal domain of McsB. In terms of biological role, catalyzes the specific phosphorylation of arginine residues in a large number of proteins. Is part of the bacterial stress response system. Protein arginine phosphorylation has a physiologically important role and is involved in the regulation of many critical cellular processes, such as protein homeostasis, motility, competence, and stringent and stress responses, by regulating gene expression and protein activity. The chain is Protein-arginine kinase from Bacillus cereus (strain ATCC 10987 / NRS 248).